The primary structure comprises 65 residues: UPF0434 protein CC_0108 (65 aa).

This sequence belongs to the UPF0434 family.

The polypeptide is UPF0434 protein CC_0108 (Caulobacter vibrioides (strain ATCC 19089 / CIP 103742 / CB 15) (Caulobacter crescentus)).